Reading from the N-terminus, the 420-residue chain is Sulfate adenylyltransferase (420 aa).

The protein belongs to the sulfate adenylyltransferase family.

It catalyses the reaction sulfate + ATP + H(+) = adenosine 5'-phosphosulfate + diphosphate. Its pathway is sulfur metabolism; hydrogen sulfide biosynthesis; sulfite from sulfate: step 1/3. This is Sulfate adenylyltransferase from Desulforudis audaxviator (strain MP104C).